The sequence spans 377 residues: MALYSWVQRGWRCGQTWAPLLGGGYRELSATQARQLLGRRFNLLLQQKCGFRKAPRKVEPRRSDTGSSGEAYKRSALIPPLEETVFYPSPYPVRTLLKPFFFTVGFTGCAFGSAAIWQYESLKSRVQSYFDGIKADWLDSIRPQKEGNLRKEINKWWNSLSDGQRTVTGIIAANALVFCLWRVPSLHRTMIRYFTSNPASKVLCSPMLLSTFSHFSLFHMAANMYVLWSFSTSIVNILGQEQFVAVYLSAGVISNFVSYVCKVATGRYGPSLGASGAIMTVLAAVCTKIPEGRLAIIFLPVFTFTAGNALKAIIAMDTAGMILGWKFFDHAAHLGGALFGIWYITYGHELIWKNREPLVKIWHEIRTNGPKKGGGSK.

The N-terminal 50 residues, 1 to 50 (MALYSWVQRGWRCGQTWAPLLGGGYRELSATQARQLLGRRFNLLLQQKCG), are a transit peptide targeting the mitochondrion. The Mitochondrial matrix portion of the chain corresponds to 51–95 (FRKAPRKVEPRRSDTGSSGEAYKRSALIPPLEETVFYPSPYPVRT). 2 positions are modified to phosphoserine: Ser63 and Ser68. A helical membrane pass occupies residues 96-116 (LLKPFFFTVGFTGCAFGSAAI). Topologically, residues 117-165 (WQYESLKSRVQSYFDGIKADWLDSIRPQKEGNLRKEINKWWNSLSDGQR) are mitochondrial intermembrane. The helical transmembrane segment at 166–186 (TVTGIIAANALVFCLWRVPSL) threads the bilayer. Topologically, residues 187 to 214 (HRTMIRYFTSNPASKVLCSPMLLSTFSH) are mitochondrial matrix. The chain crosses the membrane as a helical span at residues 215-235 (FSLFHMAANMYVLWSFSTSIV). The Mitochondrial intermembrane segment spans residues 236 to 242 (NILGQEQ). The helical transmembrane segment at 243-263 (FVAVYLSAGVISNFVSYVCKV) threads the bilayer. The Mitochondrial matrix portion of the chain corresponds to 264 to 268 (ATGRY). A helical transmembrane segment spans residues 269-289 (GPSLGASGAIMTVLAAVCTKI). The Nucleophile role is filled by Ser275. At 290-293 (PEGR) the chain is on the mitochondrial intermembrane side. A helical transmembrane segment spans residues 294–314 (LAIIFLPVFTFTAGNALKAII). Over 315-331 (AMDTAGMILGWKFFDHA) the chain is Mitochondrial matrix. The helical transmembrane segment at 332–352 (AHLGGALFGIWYITYGHELIW) threads the bilayer. His333 is a catalytic residue. The Mitochondrial intermembrane segment spans residues 353–377 (KNREPLVKIWHEIRTNGPKKGGGSK).

Belongs to the peptidase S54 family. As to quaternary structure, interacts with PSEN1 and PSEN2. Binds OPA1. In terms of processing, P-beta is proteolytically processed (beta-cleavage) in a PARL-dependent manner.

The protein resides in the mitochondrion inner membrane. Its subcellular location is the nucleus. It carries out the reaction Cleaves type-1 transmembrane domains using a catalytic dyad composed of serine and histidine that are contributed by different transmembrane domains.. Its function is as follows. Required for the control of apoptosis during postnatal growth. Essential for proteolytic processing of an antiapoptotic form of OPA1 which prevents the release of mitochondrial cytochrome c in response to intrinsic apoptotic signals. Required for the maturation of PINK1 into its 52kDa mature form after its cleavage by mitochondrial-processing peptidase (MPP). Promotes cleavage of serine/threonine-protein phosphatase PGAM5 in damaged mitochondria in response to loss of mitochondrial membrane potential. Mediates differential cleavage of PINK1 and PGAM5 depending on the health status of mitochondria, disassociating from PINK1 and associating with PGAM5 in response to mitochondrial membrane potential loss. Required for processing of CLPB into a form with higher protein disaggregase activity by removing an autoinhibitory N-terminal peptide. Promotes processing of DIABLO/SMAC in the mitochondrion which is required for DIABLO apoptotic activity. Also required for cleavage of STARD7 and TTC19. Promotes changes in mitochondria morphology regulated by phosphorylation of P-beta domain. The chain is Presenilin-associated rhomboid-like protein, mitochondrial from Rattus norvegicus (Rat).